A 489-amino-acid polypeptide reads, in one-letter code: Beta-galactosidase (489 aa).

N6-methyllysine; partial is present on K116. K135 carries the post-translational modification N6-methyllysine. Residue E206 is the Proton donor of the active site. K273 and K311 each carry N6-methyllysine; partial. An N6-methyllysine modification is found at K332. E387 serves as the catalytic Nucleophile.

As to quaternary structure, homotetramer.

The enzyme catalyses Hydrolysis of terminal non-reducing beta-D-galactose residues in beta-D-galactosides.. In Saccharolobus solfataricus (strain ATCC 35092 / DSM 1617 / JCM 11322 / P2) (Sulfolobus solfataricus), this protein is Beta-galactosidase (lacS).